The following is a 286-amino-acid chain: uncharacterized protein (286 aa).

The HTH lysR-type domain occupies 1-58 (MLLEGIETLLVLSKEKTMSRTGSQLYISQSAVSKRIANLEKKLGKKLIVPAGRHIKLT). Positions 18–37 (MSRTGSQLYISQSAVSKRIA) form a DNA-binding region, H-T-H motif.

This sequence belongs to the LysR transcriptional regulatory family.

This is an uncharacterized protein from Vibrio cholerae serotype O1 (strain ATCC 39315 / El Tor Inaba N16961).